Here is a 33-residue protein sequence, read N- to C-terminus: uncharacterized protein (33 aa).

The segment at 1-24 (MRTGTRCDLGELSHPRKTLPPRGM) is disordered.

This is an uncharacterized protein from Treponema pallidum (strain Nichols).